Consider the following 480-residue polypeptide: Adenylosuccinate lyase (480 aa).

AMP is bound by residues Arg14, Tyr15, Arg79, His80, and Asp81. His80 is a binding site for fumarate. The active-site Proton donor/acceptor is the His153. AMP is bound at residue Gln236. Residue Gln236 participates in fumarate binding. Gln236 contributes to the N(6)-(1,2-dicarboxyethyl)-AMP binding site. Ser284 (proton donor/acceptor) is an active-site residue. Fumarate is bound by residues Ser285, Lys290, and Asn292. N(6)-(1,2-dicarboxyethyl)-AMP contacts are provided by Ser285, Lys290, and Asn292. Arg298 provides a ligand contact to AMP. Positions 324, 329, and 333 each coordinate N(6)-(1,2-dicarboxyethyl)-AMP. Residues Ser329 and Arg333 each contribute to the AMP site.

It belongs to the lyase 1 family. Adenylosuccinate lyase subfamily. Homotetramer.

It catalyses the reaction N(6)-(1,2-dicarboxyethyl)-AMP = fumarate + AMP. The protein operates within purine metabolism; AMP biosynthesis via salvage pathway. Its function is as follows. Catalyzes conversion of succinyladenosine monophosphate (SAMP) to AMP and fumarate on the purine salvage pathway. The chain is Adenylosuccinate lyase from Schistosoma mansoni (Blood fluke).